Reading from the N-terminus, the 323-residue chain is MDPKYQRVELNDGHFMPVLGFGTYAPPEVPRNRAVEVTKLAIEAGFRHIDSAYLYNNEEQVGLAIRSKIADGSVKREDIFYTSKLWCTFFQPQMVQPALESSLKKLQLDYVDLYLLHFPMALKPGETPLPKDENGKVIFDTVDLSATWEVMEKCKDAGLAKSIGVSNFNCRQLEMILNKPGLKYKPVCNQVECHPYLNQSKLLDFCKSKDIVLVAHSALGTQRHKLWVDPNSPVLLEDPVLCALAKKHKQTPALIALRYQLQRGVVVLAKSYNEQRIRENIQVFEFQLTSEDMKVLDGLNRNYRYVVMDFLMDHPDYPFSDEY.

Residues 20–24 and D50 contribute to the NADP(+) site; that span reads GFGTY. Y55 (proton donor) is an active-site residue. H117 provides a ligand contact to substrate. NADP(+)-binding positions include 166–167, Q190, 216–221, and 270–280; these read SN, HSALGT, and KSYNEQRIREN.

The protein belongs to the aldo/keto reductase family. As to quaternary structure, monomer. The N-terminus is blocked. Liver specific.

The protein localises to the cytoplasm. It localises to the cytosol. The enzyme catalyses a 3alpha-hydroxysteroid + NADP(+) = a 3-oxosteroid + NADPH + H(+). The catalysed reaction is a 3alpha-hydroxysteroid + NAD(+) = a 3-oxosteroid + NADH + H(+). It catalyses the reaction 5alpha-androstane-3alpha,17beta-diol + NADP(+) = 17beta-hydroxy-5alpha-androstan-3-one + NADPH + H(+). It carries out the reaction 5alpha-androstane-3beta,17beta-diol + NADP(+) = 17beta-hydroxy-5alpha-androstan-3-one + NADPH + H(+). The enzyme catalyses 5alpha-androstane-3alpha,17beta-diol + NAD(+) = 17beta-hydroxy-5alpha-androstan-3-one + NADH + H(+). The catalysed reaction is 17beta-estradiol + NADP(+) = estrone + NADPH + H(+). It catalyses the reaction 17beta-estradiol + NAD(+) = estrone + NADH + H(+). It carries out the reaction (20S)-hydroxypregn-4-en-3-one + NADP(+) = progesterone + NADPH + H(+). The enzyme catalyses (20S)-hydroxypregn-4-en-3-one + NAD(+) = progesterone + NADH + H(+). The catalysed reaction is androsterone + NADP(+) = 5alpha-androstan-3,17-dione + NADPH + H(+). It catalyses the reaction testosterone + NADP(+) = androst-4-ene-3,17-dione + NADPH + H(+). It carries out the reaction testosterone + NAD(+) = androst-4-ene-3,17-dione + NADH + H(+). The enzyme catalyses 3alpha-hydroxy-5alpha-androstane 17-O-(beta-D-glucuronate) + NADP(+) = 5alpha-dihydrotestosterone 17-O-(beta-D-glucuronate) + NADPH + H(+). The catalysed reaction is (3beta,5alpha,17beta)-3-hydroxy-androstan-17-yl sulfate + NADP(+) = 5alpha-dihydrotestosterone sulfate + NADPH + H(+). It catalyses the reaction 5alpha-androstane-3alpha,17beta-diol + NAD(+) = androsterone + NADH + H(+). It carries out the reaction chlordecone alcohol + NADP(+) = chlordecone + NADPH + H(+). Its pathway is steroid metabolism. Its activity is regulated as follows. Inhibited by nonsteroidal the anti-inflammatory drugs (NSAID) flufenamic. The oxidation reaction is inhibited by low micromolar concentrations of NADPH. Functionally, cytosolic aldo-keto reductase that catalyzes the NADH and NADPH-dependent reduction of ketosteroids to hydroxysteroids. Liver specific enzyme that acts as an NAD(P)(H)-dependent 3-, 17- and 20-ketosteroid reductase on the steroid nucleus and side chain. Displays the ability to catalyze both oxidation and reduction in vitro, but most probably acts as a reductase in vivo since the oxidase activity measured in vitro is inhibited by physiological concentration of NADPH. Acts preferentially as a 3-alpha-hydroxysteroid dehydrogenase (HSD) with a subsidiary 3-beta-HSD activity. Catalyzes efficiently the transformation of the potent androgen 5-alpha-dihydrotestosterone (5alpha-DHT or 17beta-hydroxy-5alpha-androstan-3-one) into the less active form, 5-alpha-androstan-3-alpha,17-beta-diol (3-alpha-diol). Catalyzes the reduction of estrone into 17beta-estradiol but with low efficiency. Metabolizes a broad spectrum of natural and synthetic therapeutic steroid and plays an important role in metabolism of androgens, estrogens, progestereone and conjugated steroids. Catalyzes the biotransformation of the pesticide chlordecone (kepone) to its corresponding alcohol leading to increased biliary excretion of the pesticide and concomitant reduction of its neurotoxicity since bile is the major excretory route. The polypeptide is Aldo-keto reductase family 1 member C4 (AKR1C4) (Homo sapiens (Human)).